We begin with the raw amino-acid sequence, 301 residues long: tRNA pseudouridine synthase B (301 aa).

The Nucleophile role is filled by D38.

This sequence belongs to the pseudouridine synthase TruB family. Type 1 subfamily.

The catalysed reaction is uridine(55) in tRNA = pseudouridine(55) in tRNA. Its function is as follows. Responsible for synthesis of pseudouridine from uracil-55 in the psi GC loop of transfer RNAs. The sequence is that of tRNA pseudouridine synthase B from Ehrlichia canis (strain Jake).